A 364-amino-acid polypeptide reads, in one-letter code: Chorismate synthase (364 aa).

Residues Arg48 and Arg54 each contribute to the NADP(+) site. FMN contacts are provided by residues 125-127 (RSS), 238-239 (NA), Gly278, 293-297 (KPTSS), and Arg319.

It belongs to the chorismate synthase family. Homotetramer. Requires FMNH2 as cofactor.

It carries out the reaction 5-O-(1-carboxyvinyl)-3-phosphoshikimate = chorismate + phosphate. Its pathway is metabolic intermediate biosynthesis; chorismate biosynthesis; chorismate from D-erythrose 4-phosphate and phosphoenolpyruvate: step 7/7. In terms of biological role, catalyzes the anti-1,4-elimination of the C-3 phosphate and the C-6 proR hydrogen from 5-enolpyruvylshikimate-3-phosphate (EPSP) to yield chorismate, which is the branch point compound that serves as the starting substrate for the three terminal pathways of aromatic amino acid biosynthesis. This reaction introduces a second double bond into the aromatic ring system. This Shewanella loihica (strain ATCC BAA-1088 / PV-4) protein is Chorismate synthase.